Reading from the N-terminus, the 383-residue chain is S-(hydroxymethyl)glutathione dehydrogenase (383 aa).

Cys-51 lines the Zn(2+) pocket. His-52 lines the NAD(+) pocket. Zn(2+)-binding residues include His-73, Glu-74, Cys-103, Cys-106, Cys-109, Cys-117, and Cys-180. NAD(+) is bound by residues 205–210 (GAGCVG), Asp-229, and 298–300 (IGV).

It belongs to the zinc-containing alcohol dehydrogenase family. Class-III subfamily. It depends on Zn(2+) as a cofactor.

The catalysed reaction is a primary alcohol + NAD(+) = an aldehyde + NADH + H(+). The enzyme catalyses a secondary alcohol + NAD(+) = a ketone + NADH + H(+). It catalyses the reaction S-(hydroxymethyl)glutathione + NADP(+) = S-formylglutathione + NADPH + H(+). It carries out the reaction S-(hydroxymethyl)glutathione + NAD(+) = S-formylglutathione + NADH + H(+). The catalysed reaction is S-nitrosoglutathione + NADH + H(+) = S-(hydroxysulfenamide)glutathione + NAD(+). Functionally, oxidizes long-chain alcohols and, in the presence of glutathione, is able to oxidize formaldehyde. Also acts as a S-nitroso-glutathione reductase by catalyzing the NADH-dependent reduction of S-nitrosoglutathione, thereby regulating protein S-nitrosylation. The chain is S-(hydroxymethyl)glutathione dehydrogenase (FDH1) from Aspergillus oryzae (strain ATCC 42149 / RIB 40) (Yellow koji mold).